Reading from the N-terminus, the 184-residue chain is Large ribosomal subunit protein uL5 (184 aa).

It belongs to the universal ribosomal protein uL5 family. As to quaternary structure, part of the 50S ribosomal subunit; part of the 5S rRNA/L5/L18/L25 subcomplex. Contacts the 5S rRNA and the P site tRNA. Forms a bridge to the 30S subunit in the 70S ribosome.

This is one of the proteins that bind and probably mediate the attachment of the 5S RNA into the large ribosomal subunit, where it forms part of the central protuberance. In the 70S ribosome it contacts protein S13 of the 30S subunit (bridge B1b), connecting the 2 subunits; this bridge is implicated in subunit movement. Contacts the P site tRNA; the 5S rRNA and some of its associated proteins might help stabilize positioning of ribosome-bound tRNAs. The protein is Large ribosomal subunit protein uL5 of Thermotoga maritima (strain ATCC 43589 / DSM 3109 / JCM 10099 / NBRC 100826 / MSB8).